Here is a 379-residue protein sequence, read N- to C-terminus: DNA-directed RNA polymerase subunit Rpo1C (379 aa).

The protein belongs to the RNA polymerase beta' chain family. Part of the RNA polymerase complex.

It localises to the cytoplasm. The catalysed reaction is RNA(n) + a ribonucleoside 5'-triphosphate = RNA(n+1) + diphosphate. DNA-dependent RNA polymerase (RNAP) catalyzes the transcription of DNA into RNA using the four ribonucleoside triphosphates as substrates. Forms part of the jaw domain. This Pyrobaculum aerophilum (strain ATCC 51768 / DSM 7523 / JCM 9630 / CIP 104966 / NBRC 100827 / IM2) protein is DNA-directed RNA polymerase subunit Rpo1C.